A 1485-amino-acid polypeptide reads, in one-letter code: Chromosome partition protein MukB (1485 aa).

34–41 (GGNGAGKS) contributes to the ATP binding site. 6 coiled-coil regions span residues 337 to 480 (LNLV…QAYQ), 509 to 605 (QHLA…PVWL), 780 to 805 (RAAR…ATLS), 835 to 915 (EAEI…IQQH), 977 to 1116 (GMLT…AKAG), and 1210 to 1235 (EAIE…KLAI). Positions 666-783 (PSGAEDARLI…EVPLFGRAAR (118 aa)) are flexible hinge.

It belongs to the SMC family. MukB subfamily. In terms of assembly, homodimerization via its hinge domain. Binds to DNA via its C-terminal region. Interacts, and probably forms a ternary complex, with MukE and MukF via its C-terminal region. The complex formation is stimulated by calcium or magnesium. Interacts with tubulin-related protein FtsZ.

The protein resides in the cytoplasm. Its subcellular location is the nucleoid. Plays a central role in chromosome condensation, segregation and cell cycle progression. Functions as a homodimer, which is essential for chromosome partition. Involved in negative DNA supercoiling in vivo, and by this means organize and compact chromosomes. May achieve or facilitate chromosome segregation by condensation DNA from both sides of a centrally located replisome during cell division. The protein is Chromosome partition protein MukB of Yersinia pestis bv. Antiqua (strain Antiqua).